A 610-amino-acid chain; its full sequence is MCGIVGAVAQRDVAEILVEGLRRLEYRGYDSAGVAIVDAEANLTRIRRLGKVQELADAVDEAKVVGGTGIAHTRWATHGEPSEINAHPHMSGDITVVHNGIIENHEELRELLQSRGYVFESQTDTEVIAHMVEWELRTAESLLEAVQKTAKQLEGAYGTVAMDRKDPSRIVVARSGSPIVIGFGVGENFLASDQLALLNVTRRFMYLEEGDVAEITRRDVTVFDVTGERVEREITESNAEHDAGDKGQYRHFMQKEIYEQPKALINTMEGRITADSVVTDAIGVHAADILSKVEHVQIVACGTSYNAGMTARYWFEDIAGVSCDVEIASEFRYRKFVTRPNSLLITLSQSGETADTLAALRLAKEKGYMAAMTICNVAGSSLVRESDFAFMTRAGVEIGVASTKAFTTQLSALLMLVTALGKEQGRISKEKEKEIVEALHALPKQINAALSFEKEIEALATDFADKHHTLFLGRGEFYPIAMEASLKLKEISYIHAEAYAAGELKHGPLALIDADMPVVVVAPSNDLLEKLKSNVEEVRARGGLLYVFADADAGFEGDETMKIITMPHVSEITAAIYYTIPMQLLSYYVALIKGTDVDQPRNLAKAVTVE.

C2 functions as the Nucleophile; for GATase activity in the catalytic mechanism. The Glutamine amidotransferase type-2 domain maps to 2 to 218; that stretch reads CGIVGAVAQR…EGDVAEITRR (217 aa). SIS domains are found at residues 286–426 and 459–600; these read AADI…EQGR and LATD…VDQP. The active-site For Fru-6P isomerization activity is the K605.

As to quaternary structure, homodimer.

Its subcellular location is the cytoplasm. The catalysed reaction is D-fructose 6-phosphate + L-glutamine = D-glucosamine 6-phosphate + L-glutamate. Catalyzes the first step in hexosamine metabolism, converting fructose-6P into glucosamine-6P using glutamine as a nitrogen source. This chain is Glutamine--fructose-6-phosphate aminotransferase [isomerizing], found in Vibrio parahaemolyticus serotype O3:K6 (strain RIMD 2210633).